The sequence spans 801 residues: DNA mismatch repair protein MutS (801 aa).

Residue 590–597 participates in ATP binding; the sequence is GPNMSGKS.

It belongs to the DNA mismatch repair MutS family.

Its function is as follows. This protein is involved in the repair of mismatches in DNA. It is possible that it carries out the mismatch recognition step. This protein has a weak ATPase activity. The polypeptide is DNA mismatch repair protein MutS (Thermotoga neapolitana (strain ATCC 49049 / DSM 4359 / NBRC 107923 / NS-E)).